The chain runs to 102 residues: Large ribosomal subunit protein bL21 (102 aa).

The protein belongs to the bacterial ribosomal protein bL21 family. As to quaternary structure, part of the 50S ribosomal subunit. Contacts protein L20.

Functionally, this protein binds to 23S rRNA in the presence of protein L20. The chain is Large ribosomal subunit protein bL21 from Solidesulfovibrio magneticus (strain ATCC 700980 / DSM 13731 / RS-1) (Desulfovibrio magneticus).